The following is a 501-amino-acid chain: Group 3 secretory phospholipase A2 (501 aa).

Positions 1-19 (MGVLVVLLGVLSFLGRTLG) are cleaved as a signal peptide. The tract at residues 119 to 139 (RGPAESPAGTREKRAAGQNGV) is disordered. A phospholipase A2-like region spans residues 150-291 (GWTVPGTLWC…SWSSPATSLT (142 aa)). The Ca(2+) site is built by Trp158, Gly160, and Gly162. 4 disulfide bridges follow: Cys159-Cys181, Cys180-Cys220, Cys187-Cys213, and Cys211-Cys244. Asn167 carries N-linked (GlcNAc...) asparagine glycosylation. His184 is an active-site residue. Asp185 contributes to the Ca(2+) binding site. Asp214 is an active-site residue. Asn280 carries N-linked (GlcNAc...) asparagine glycosylation. Residues 284 to 298 (SSPATSLTPSPQNPA) show a composition bias toward polar residues. A disordered region spans residues 284 to 339 (SSPATSLTPSPQNPALSRPQPMQHPQQWPSEWKESKSPSKTNATALQAPVASPGSD). Asn325 and Asn403 each carry an N-linked (GlcNAc...) asparagine glycan.

The protein belongs to the phospholipase A2 family. Ca(2+) serves as cofactor. N-glycosylation does not affect the catalytic activity, but is required for proper secretion. A nonglycosylated form was observed in several cell types. In terms of processing, in several cell types, the N- and C-termini are cleaved off.

The protein localises to the secreted. It localises to the cell membrane. Its subcellular location is the cytoplasm. The protein resides in the cytoskeleton. It is found in the microtubule organizing center. The protein localises to the centrosome. It localises to the centriole. Its subcellular location is the recycling endosome. The catalysed reaction is a 1,2-diacyl-sn-glycero-3-phosphocholine + H2O = a 1-acyl-sn-glycero-3-phosphocholine + a fatty acid + H(+). It catalyses the reaction 1-hexadecanoyl-2-(9Z,12Z-octadecadienoyl)-sn-glycero-3-phosphocholine + H2O = (9Z,12Z)-octadecadienoate + 1-hexadecanoyl-sn-glycero-3-phosphocholine + H(+). The enzyme catalyses 1-hexadecanoyl-2-(5Z,8Z,11Z,14Z-eicosatetraenoyl)-sn-glycero-3-phosphocholine + H2O = 1-hexadecanoyl-sn-glycero-3-phosphocholine + (5Z,8Z,11Z,14Z)-eicosatetraenoate + H(+). It carries out the reaction 1-hexadecanoyl-2-(9Z,12Z-octadecadienoyl)-sn-glycero-3-phosphoethanolamine + H2O = 1-hexadecanoyl-sn-glycero-3-phosphoethanolamine + (9Z,12Z)-octadecadienoate + H(+). The catalysed reaction is 1-hexadecanoyl-2-(5Z,8Z,11Z,14Z-eicosatetraenoyl)-sn-glycero-3-phosphoethanolamine + H2O = 1-hexadecanoyl-sn-glycero-3-phosphoethanolamine + (5Z,8Z,11Z,14Z)-eicosatetraenoate + H(+). In terms of biological role, secretory calcium-dependent phospholipase A2 that primarily targets extracellular phospholipids. Hydrolyzes the ester bond of the fatty acyl group attached at sn-2 position of phospholipids without apparent head group selectivity. Contributes to phospholipid remodeling of low-density lipoprotein (LDL) and high-density lipoprotein (HDL) particles. Hydrolyzes LDL phospholipids releasing unsaturated fatty acids that regulate macrophage differentiation toward foam cells. May act in an autocrine and paracrine manner. Secreted by immature mast cells, acts on nearby fibroblasts upstream to PTDGS to synthesize prostaglandin D2 (PGD2), which in turn promotes mast cell maturation and degranulation via PTGDR. Secreted by epididymal epithelium, acts on immature sperm cells within the duct, modulating the degree of unsaturation of the fatty acyl components of phosphatidylcholines required for acrosome assembly and sperm cell motility. Facilitates the replacement of fatty acyl chains in phosphatidylcholines in sperm membranes from omega-6 and omega-9 to omega-3 polyunsaturated fatty acids (PUFAs). Coupled to lipoxygenase pathway, may process omega-6 PUFAs to generate oxygenated lipid mediators in the male reproductive tract. At pericentrosomal preciliary compartment, negatively regulates ciliogenesis likely by regulating endocytotic recycling of ciliary membrane protein. Coupled to cyclooxygenase pathway provides arachidonate to generate prostaglandin E2 (PGE2), a potent immunomodulatory lipid in inflammation and tumorigenesis. At colonic epithelial barrier, preferentially hydrolyzes phospholipids having arachidonate and docosahexaenoate at sn-2 position, contributing to the generation of oxygenated metabolites involved in colonic stem cell homeostasis. Releases C16:0 and C18:0 lysophosphatidylcholine subclasses from neuron plasma membranes and promotes neurite outgrowth and neuron survival. In Bos taurus (Bovine), this protein is Group 3 secretory phospholipase A2 (PLA2G3).